We begin with the raw amino-acid sequence, 586 residues long: Maltogenic alpha-amylase (586 aa).

The Ca(2+) site is built by N147, N152, D153, G172, and D174. The substrate site is built by H247 and R326. Residue D328 is the Nucleophile of the active site. E357 (proton donor) is an active-site residue. Residues 423–424 (HD), D468, and R472 each bind substrate.

The protein belongs to the glycosyl hydrolase 13 family. Requires Ca(2+) as cofactor.

It catalyses the reaction hydrolysis of (1-&gt;4)-alpha-D-glucosidic linkages in polysaccharides so as to remove successive alpha-maltose residues from the non-reducing ends of the chains.. Its function is as follows. Converts starch into maltose. This Bacillus acidopullulyticus protein is Maltogenic alpha-amylase.